The sequence spans 82 residues: Small ribosomal subunit protein bS16 (82 aa).

This sequence belongs to the bacterial ribosomal protein bS16 family.

The protein is Small ribosomal subunit protein bS16 of Vibrio cholerae serotype O1 (strain ATCC 39541 / Classical Ogawa 395 / O395).